The sequence spans 133 residues: MLSDPIADMLTRIRNATRTHKETVDIPASKFKEELAKLLVREGYVQGVERTRPEGQKFDVLRVTLKYGEKREQVIKHIERVSRPGRRAYVSAENLPRVQRGLGVAVVSTSRGLLPDREARQQGVGGEVVCVLW.

Belongs to the universal ribosomal protein uS8 family. In terms of assembly, part of the 30S ribosomal subunit. Contacts proteins S5 and S12.

Functionally, one of the primary rRNA binding proteins, it binds directly to 16S rRNA central domain where it helps coordinate assembly of the platform of the 30S subunit. The polypeptide is Small ribosomal subunit protein uS8 (Deinococcus radiodurans (strain ATCC 13939 / DSM 20539 / JCM 16871 / CCUG 27074 / LMG 4051 / NBRC 15346 / NCIMB 9279 / VKM B-1422 / R1)).